Consider the following 392-residue polypeptide: S-adenosylmethionine synthase (392 aa).

Residue Glu10 participates in Mg(2+) binding. His16 contributes to the ATP binding site. A K(+)-binding site is contributed by Glu44. The L-methionine site is built by Glu57 and Gln100. Residues 168–170, 236–239, Asp247, 253–254, Ala270, Lys274, and Lys278 each bind ATP; these read DGK, SGRF, and RK. Asp247 is a binding site for L-methionine. Lys278 serves as a coordination point for L-methionine.

Belongs to the AdoMet synthase family. As to quaternary structure, homotetramer. It depends on Mn(2+) as a cofactor. The cofactor is Mg(2+). Requires Co(2+) as cofactor. K(+) serves as cofactor.

The protein resides in the cytoplasm. The enzyme catalyses L-methionine + ATP + H2O = S-adenosyl-L-methionine + phosphate + diphosphate. It participates in amino-acid biosynthesis; S-adenosyl-L-methionine biosynthesis; S-adenosyl-L-methionine from L-methionine: step 1/1. Its function is as follows. Catalyzes the formation of S-adenosylmethionine from methionine and ATP. The reaction comprises two steps that are both catalyzed by the same enzyme: formation of S-adenosylmethionine (AdoMet) and triphosphate, and subsequent hydrolysis of the triphosphate. The polypeptide is S-adenosylmethionine synthase (SAMS) (Phaseolus lunatus (Lima bean)).